A 774-amino-acid polypeptide reads, in one-letter code: Lon protease 2 (774 aa).

The region spanning 5–198 is the Lon N-terminal domain; the sequence is YPLMPLRDIV…LLLEILFREL (194 aa). 350 to 357 provides a ligand contact to ATP; sequence GPPGVGKT. A Lon proteolytic domain is found at 588 to 769; sequence RDEVGLATGL…DQVLEQALLS (182 aa). Catalysis depends on residues serine 675 and lysine 718.

This sequence belongs to the peptidase S16 family. As to quaternary structure, homohexamer. Organized in a ring with a central cavity.

The protein resides in the cytoplasm. The catalysed reaction is Hydrolysis of proteins in presence of ATP.. Functionally, ATP-dependent serine protease that mediates the selective degradation of mutant and abnormal proteins as well as certain short-lived regulatory proteins. Required for cellular homeostasis and for survival from DNA damage and developmental changes induced by stress. Degrades polypeptides processively to yield small peptide fragments that are 5 to 10 amino acids long. Binds to DNA in a double-stranded, site-specific manner. This Desulfotalea psychrophila (strain LSv54 / DSM 12343) protein is Lon protease 2.